Reading from the N-terminus, the 349-residue chain is Ion-translocating oxidoreductase complex subunit D (349 aa).

3 helical membrane passes run 20–42, 77–99, and 124–144; these read VMQRVILCLLPGLVVQCAFFGWG, SAMLTAILIGVAIPPLAPWWMIV, and AMAAYVLLLVSFPVQMTTWIA. Thr185 carries the post-translational modification FMN phosphoryl threonine. 5 helical membrane passes run 212 to 232, 239 to 259, 265 to 285, 291 to 311, and 315 to 335; these read STGVGWFWVNLAYLAGGLVLL, WHISTGVLLGLFVASSIGFLL, ASPLMHLFSGATMLAAFFIAT, ATSSRGRIIFGALIGVLVYII, and GGYPDAFAFAVLLANLCAPFI.

It belongs to the NqrB/RnfD family. The complex is composed of six subunits: RnfA, RnfB, RnfC, RnfD, RnfE and RnfG. The cofactor is FMN.

It is found in the cell inner membrane. In terms of biological role, part of a membrane-bound complex that couples electron transfer with translocation of ions across the membrane. The protein is Ion-translocating oxidoreductase complex subunit D of Shewanella baltica (strain OS223).